A 433-amino-acid chain; its full sequence is MTNAFNTSNSQAVFHAAQELMPGGVSSPVRAFKSVNGDPIVFDRVKGAYAWDLDGNRFIDYVGSWGPAICGHSHPEVIASLQEALEKGTSFGAPCELENKLAEMVIEAVPSVEMVRFVNSGTEACMAVLRLMRAFTGRDKLIKFEGCYHGHADMFLVKAGSGVATLGLPDSPGVPRSTTSNTLTAPYNDLEAVKNLFAENPDAIAGVILEPIVGNAGFIQPEPGFLEGLRELTKENGSLLVFDEVMTGFRISYGGAQGRFGVTPDLTTMGKVIGGGLPVGAYGGRKDIMSMVAPAGPMYQAGTLSGNPLAMTAGIKTLEILQQEGTYERLASITNRLINGICESAKQAGIPITGSSISGMFGFYLCEGPVRNFEEAKQTNSDYFGKLHRAMLAKGVYLAPSAFEAGFTSLAHSEEDIDSTLKAFNECFNELSQ.

An N6-(pyridoxal phosphate)lysine modification is found at Lys-271.

This sequence belongs to the class-III pyridoxal-phosphate-dependent aminotransferase family. HemL subfamily. Homodimer. Pyridoxal 5'-phosphate serves as cofactor.

The protein localises to the cytoplasm. The enzyme catalyses (S)-4-amino-5-oxopentanoate = 5-aminolevulinate. The protein operates within porphyrin-containing compound metabolism; protoporphyrin-IX biosynthesis; 5-aminolevulinate from L-glutamyl-tRNA(Glu): step 2/2. It functions in the pathway porphyrin-containing compound metabolism; chlorophyll biosynthesis. The polypeptide is Glutamate-1-semialdehyde 2,1-aminomutase (Prochlorococcus marinus (strain SARG / CCMP1375 / SS120)).